The chain runs to 218 residues: Holin (218 aa).

The Cytoplasmic portion of the chain corresponds to 1–34 (MAAPRISFSPSDILFGVLDRLFKDNATGKVLASR). A helical; Signal-anchor for type II membrane protein transmembrane segment spans residues 35–49 (VAVVILLFMMAIVWY). Over 50 to 218 (RGDSFFEYYK…QAARILGRAK (169 aa)) the chain is Periplasmic. C175 and C207 are disulfide-bonded.

The protein belongs to the T4likevirus holin family. Homomultimer. Heterotetramer composed of 2 holin and 2 antiholin. The holin-antiholin complex binds dsDNA. Interacts (via C-terminus) with antiholin (via C-terminus); this interaction blocks the holin homomultimerization and delays host cell lysis. Interacts (via N-terminus) with the lysis inhibition accessory protein rIII; this interaction stabilizes the holin-antiholin complex thereby resulting in a robust block of the hole formation. In terms of processing, disulfide bond is required for functionality.

The protein localises to the host cell inner membrane. Accumulates harmlessly in the cytoplasmic membrane until it reaches a critical concentration that triggers the formation of micron-scale pores (holes) causing host cell membrane disruption and endolysin escape into the periplasmic space. Determines the precise timing of host cell lysis. Regulated by specific antiholins that somehow sense superinfections and then delay lysis. Participates with the endolysin and spanin proteins in the sequential events which lead to the programmed host cell lysis releasing the mature viral particles from the host cell. This chain is Holin (T), found in Enterobacteria phage K3 (Bacteriophage K3).